The chain runs to 372 residues: O-methyltransferase bfoE (372 aa).

Residue tryptophan 186 coordinates S-adenosyl-L-methionine. Histidine 285 acts as the Proton acceptor in catalysis.

Belongs to the class I-like SAM-binding methyltransferase superfamily. Cation-independent O-methyltransferase family.

The protein operates within secondary metabolite biosynthesis. Functionally, cytochrome P450 monooxygenase; part of the gene cluster that mediates the biosynthesis of bifonsecin B, a dimeric gamma-naphthopyrone. The first step in the biosynthesis of bifonsecin B is the production of gamma-naphthopyrone precursor YWA1 by the non-reducing polyketide synthase albA, via condensation of one acetyl-CoA starter unit with 6 malonyl-CoA units. YWA1 is then methylated by bfoE at position C-6 to yield foncesin which is further methylated at position C-8 by bfoD to produce fonsecin B. A key enzyme in the biosynthetic pathway is the cytochrome P450 monooxygenase bfoB which catalyzes the oxidative dimerization of fonsecin B to bifonsecin B. Bfob also catalyzes the oxidative dimerization of rubrofusarin B into nigerone. The stereoselectivity of bfoB is influenced by the two natural monomeric substrates; homodimerization of fonsecin B yields a stereochemically pure biaryl, M-foncerine B, while rubrofusarin B yields a mixture of enantiomers M- and P-nigerone. This Aspergillus brasiliensis (strain CBS 101740 / IMI 381727 / IBT 21946) protein is O-methyltransferase bfoE.